The sequence spans 102 residues: Large ribosomal subunit protein bL21 (102 aa).

It belongs to the bacterial ribosomal protein bL21 family. In terms of assembly, part of the 50S ribosomal subunit. Contacts protein L20.

In terms of biological role, this protein binds to 23S rRNA in the presence of protein L20. The sequence is that of Large ribosomal subunit protein bL21 from Bacillus cytotoxicus (strain DSM 22905 / CIP 110041 / 391-98 / NVH 391-98).